A 596-amino-acid chain; its full sequence is (E)-beta-ocimene synthase, chloroplastic (596 aa).

Residues Met-1 to Arg-35 constitute a chloroplast transit peptide. Arg-307, Asp-344, Asp-348, Arg-485, and Asn-488 together coordinate (2E)-geranyl diphosphate. Residues Asp-344 and Asp-348 each contribute to the Mg(2+) site. The DDXXD motif motif lies at Asp-344 to Asp-348. Residues Asn-488, Ala-492, and Glu-496 each coordinate Mg(2+).

The protein belongs to the terpene synthase family. Tpsb subfamily. Mg(2+) is required as a cofactor. It depends on Mn(2+) as a cofactor. As to expression, highly expressed in leaves, stems and disk florets. Detected in roots.

It localises to the plastid. The protein resides in the chloroplast. The catalysed reaction is (2E)-geranyl diphosphate = (E)-beta-ocimene + diphosphate. It participates in secondary metabolite biosynthesis; terpenoid biosynthesis. In terms of biological role, monoterpene synthase involved in the biosynthesis of (E)-beta-ocimene as the major product and trace amounts of (Z)-beta-ocimene. Can only accept geranyl diphosphate as substrate. The polypeptide is (E)-beta-ocimene synthase, chloroplastic (Matricaria chamomilla var. recutita (German chamomile)).